Consider the following 453-residue polypeptide: Maltotriose-binding protein (453 aa).

A signal peptide spans 1-29; the sequence is MKRGIYAVLLVGVLIFSVVASGCIGGTQT. Low complexity predominate over residues 27-65; it reads TQTQTETQTPEKTQTPTTTQPSPTTTTSPTQTTSQTPTE. The disordered stretch occupies residues 27–73; it reads TQTQTETQTPEKTQTPTTTQPSPTTTTSPTQTTSQTPTETETHTQEA.

Belongs to the bacterial solute-binding protein 1 family.

Its function is as follows. Involved in an abc transport system for maltotriose. The protein is Maltotriose-binding protein (malE) of Pyrococcus abyssi (strain GE5 / Orsay).